The primary structure comprises 38 residues: Lebetin-2-alpha (38 aa).

Positions 1 to 38 are disordered; it reads GDNKPPKKGPPNGCFGHKIDRIGSHSGLGCNKVDDNKG. An intrachain disulfide couples Cys-14 to Cys-30.

It belongs to the natriuretic peptide family. As to expression, expressed by the venom gland.

Its subcellular location is the secreted. Its function is as follows. Inhibits platelet aggregation induced by thrombin, collagen and PAF-acether. Human platelet aggregation induced by thrombin is inhibited by synthetic lebetin-1-alpha with (IC(50)=140 nM). In vivo, inhibits collagen-induced thrombocytopenia in rats. Is not toxic upon intravenous injection into mice and rats. Functionally, inhibits platelet aggregation induced by thrombin, collagen and PAF-acether. Human platelet aggregation induced by thrombin is inhibited by synthetic lebetin-1-beta with (IC(50)=32 nM). In vivo, inhibits collagen-induced thrombocytopenia in rats. Is not toxic upon intravenous injection into mice and rats. Inhibits platelet aggregation induced by thrombin, collagen and PAF-acether. Human platelet aggregation induced by thrombin is inhibited by synthetic lebetin-1-gamma with (IC(50)=5 nM). In vivo, inhibits collagen-induced thrombocytopenia in rats. Is not toxic upon intravenous injection into mice and rats. In terms of biological role, inhibits platelet aggregation induced by thrombin, collagen and PAF-acether. Human platelet aggregation induced by thrombin is inhibited by synthetic lebetin-1-alpha with (IC(50)=2.5 nM). In vivo, inhibits collagen-induced thrombocytopenia in rats. Is not toxic upon intravenous injection into mice and rats. Its function is as follows. Inhibits platelet aggregation induced by thrombin, collagen and PAF-acether. Human platelet aggregation induced by thrombin is inhibited by synthetic lebetin-1-alpha with (IC(50)=2.8 nM). In vivo, inhibits collagen-induced thrombocytopenia in rats. Is not toxic upon intravenous injection into mice and rats. This chain is Lebetin-2-alpha, found in Macrovipera lebetinus (Levantine viper).